The primary structure comprises 483 residues: Glutamyl-tRNA(Gln) amidotransferase subunit A (483 aa).

Catalysis depends on charge relay system residues Lys-77 and Ser-152. The active-site Acyl-ester intermediate is the Ser-176.

This sequence belongs to the amidase family. GatA subfamily. As to quaternary structure, heterotrimer of A, B and C subunits.

The enzyme catalyses L-glutamyl-tRNA(Gln) + L-glutamine + ATP + H2O = L-glutaminyl-tRNA(Gln) + L-glutamate + ADP + phosphate + H(+). In terms of biological role, allows the formation of correctly charged Gln-tRNA(Gln) through the transamidation of misacylated Glu-tRNA(Gln) in organisms which lack glutaminyl-tRNA synthetase. The reaction takes place in the presence of glutamine and ATP through an activated gamma-phospho-Glu-tRNA(Gln). This is Glutamyl-tRNA(Gln) amidotransferase subunit A from Listeria innocua serovar 6a (strain ATCC BAA-680 / CLIP 11262).